The primary structure comprises 448 residues: tRNA modification GTPase MnmE (448 aa).

Residues arginine 24, glutamate 81, and lysine 120 each contribute to the (6S)-5-formyl-5,6,7,8-tetrahydrofolate site. In terms of domain architecture, TrmE-type G spans 216–373 (GLNVVLVGAP…LKRTLLREAG (158 aa)). Asparagine 226 provides a ligand contact to K(+). GTP is bound by residues 226 to 231 (NVGKSS), 245 to 251 (TDIAGTT), and 270 to 273 (DTAG). Serine 230 provides a ligand contact to Mg(2+). Positions 245, 247, and 250 each coordinate K(+). A Mg(2+)-binding site is contributed by threonine 251. Position 448 (lysine 448) interacts with (6S)-5-formyl-5,6,7,8-tetrahydrofolate.

The protein belongs to the TRAFAC class TrmE-Era-EngA-EngB-Septin-like GTPase superfamily. TrmE GTPase family. Homodimer. Heterotetramer of two MnmE and two MnmG subunits. It depends on K(+) as a cofactor.

The protein localises to the cytoplasm. Its function is as follows. Exhibits a very high intrinsic GTPase hydrolysis rate. Involved in the addition of a carboxymethylaminomethyl (cmnm) group at the wobble position (U34) of certain tRNAs, forming tRNA-cmnm(5)s(2)U34. This is tRNA modification GTPase MnmE from Neisseria meningitidis serogroup B (strain ATCC BAA-335 / MC58).